The primary structure comprises 20 residues: Catechol 1,2-dioxygenase (20 aa).

Belongs to the intradiol ring-cleavage dioxygenase family. In terms of assembly, homodimer which dissociates into active monomeric subunits at high ionic strengths. The cofactor is Fe(3+).

It catalyses the reaction catechol + O2 = cis,cis-muconate + 2 H(+). It participates in aromatic compound metabolism; beta-ketoadipate pathway; 5-oxo-4,5-dihydro-2-furylacetate from catechol: step 1/3. The sequence is that of Catechol 1,2-dioxygenase from Acinetobacter radioresistens.